The following is a 212-amino-acid chain: Pyrrolidone-carboxylate peptidase (212 aa).

Residues Glu-80, Cys-143, and His-165 contribute to the active site.

It belongs to the peptidase C15 family. In terms of assembly, homotetramer.

Its subcellular location is the cytoplasm. It catalyses the reaction Release of an N-terminal pyroglutamyl group from a polypeptide, the second amino acid generally not being Pro.. Functionally, removes 5-oxoproline from various penultimate amino acid residues except L-proline. The polypeptide is Pyrrolidone-carboxylate peptidase (Vibrio parahaemolyticus serotype O3:K6 (strain RIMD 2210633)).